Consider the following 73-residue polypeptide: Beta-1 adrenergic receptor (73 aa).

The helical transmembrane segment at 1–12 threads the bilayer; that stretch reads ISALVSFLPILM. Topologically, residues 13–38 are extracellular; sequence HWWRAENDEARRCYNDPKCCDFVTNR. Cys-25 and Cys-31 are oxidised to a cystine. The helical transmembrane segment at 39–64 threads the bilayer; that stretch reads AYAIASSVVSFYVPLCIMAFVYLRVF. A cyanopindolol-binding site is contributed by Ser-44. Residues 65 to 73 are Cytoplasmic-facing; sequence REAQKQVKK.

The protein belongs to the G-protein coupled receptor 1 family. Adrenergic receptor subfamily. ADRB1 sub-subfamily. Interacts (via C-terminus PDZ motif) with RAPGEF2; the interaction is direct. Interacts with GOPC, MAGI3 and DLG4. In terms of processing, homologous desensitization of the receptor is mediated by its phosphorylation by beta-adrenergic receptor kinase.

Its subcellular location is the cell membrane. The protein localises to the early endosome. Its function is as follows. Beta-adrenergic receptors mediate the catecholamine-induced activation of adenylate cyclase through the action of G proteins. This receptor binds epinephrine and norepinephrine with approximately equal affinity. Mediates Ras activation through G(s)-alpha- and cAMP-mediated signaling. In dorsal pons neurons, involved in the regulation of sleep/wake behaviors. The protein is Beta-1 adrenergic receptor (ADRB1) of Meriones unguiculatus (Mongolian jird).